The sequence spans 207 residues: Pyridoxal 5'-phosphate synthase subunit PdxT (207 aa).

53–55 (GES) contacts L-glutamine. Cys85 serves as the catalytic Nucleophile. L-glutamine is bound by residues Arg114 and 143–144 (IR). Active-site charge relay system residues include His184 and Glu186.

It belongs to the glutaminase PdxT/SNO family. As to quaternary structure, in the presence of PdxS, forms a dodecamer of heterodimers. Only shows activity in the heterodimer.

The enzyme catalyses aldehydo-D-ribose 5-phosphate + D-glyceraldehyde 3-phosphate + L-glutamine = pyridoxal 5'-phosphate + L-glutamate + phosphate + 3 H2O + H(+). It carries out the reaction L-glutamine + H2O = L-glutamate + NH4(+). The protein operates within cofactor biosynthesis; pyridoxal 5'-phosphate biosynthesis. In terms of biological role, catalyzes the hydrolysis of glutamine to glutamate and ammonia as part of the biosynthesis of pyridoxal 5'-phosphate. The resulting ammonia molecule is channeled to the active site of PdxS. This chain is Pyridoxal 5'-phosphate synthase subunit PdxT, found in Acidothermus cellulolyticus (strain ATCC 43068 / DSM 8971 / 11B).